A 155-amino-acid polypeptide reads, in one-letter code: MYQKRQAPTLSSKEAAIQLLSRRDHGLYELHQKLAMKGYEEADIEAAINFCLEHNYLDDLRYAKSQVRQHVYKGHGERRIRQELNQKRVAESVIEQAMAEEPQDWFELAKLAAEKKFKGIKAKDQKEYAKQVRFLQYRGYSFDQISYALSFEDED.

This sequence belongs to the RecX family.

The protein resides in the cytoplasm. Its function is as follows. Modulates RecA activity. The polypeptide is Regulatory protein RecX (Vibrio parahaemolyticus serotype O3:K6 (strain RIMD 2210633)).